Reading from the N-terminus, the 1228-residue chain is DNA-directed RNA polymerase subunit beta'' (1228 aa).

Positions 222, 296, 303, and 306 each coordinate Zn(2+).

It belongs to the RNA polymerase beta' chain family. RpoC2 subfamily. As to quaternary structure, in plastids the minimal PEP RNA polymerase catalytic core is composed of four subunits: alpha, beta, beta', and beta''. When a (nuclear-encoded) sigma factor is associated with the core the holoenzyme is formed, which can initiate transcription. Zn(2+) serves as cofactor.

It is found in the plastid. The protein resides in the chloroplast. The catalysed reaction is RNA(n) + a ribonucleoside 5'-triphosphate = RNA(n+1) + diphosphate. In terms of biological role, DNA-dependent RNA polymerase catalyzes the transcription of DNA into RNA using the four ribonucleoside triphosphates as substrates. This is DNA-directed RNA polymerase subunit beta'' from Gracilaria tenuistipitata var. liui (Red alga).